A 323-amino-acid chain; its full sequence is Aldo-keto reductase family 1 member C18 (323 aa).

NADP(+) is bound by residues 20–24 (GFGTY) and D50. The active-site Proton donor is the Y55. H117 provides a ligand contact to substrate. Residues 166 to 167 (SN), Q190, 216 to 221 (YGALGT), and 270 to 280 (KSFNEERIREN) each bind NADP(+).

The protein belongs to the aldo/keto reductase family. As to quaternary structure, monomer.

The protein resides in the cytoplasm. The catalysed reaction is (17R,20S)-17,20-dihydroxypregn-4-en-3-one + NADP(+) = 17alpha-hydroxyprogesterone + NADPH + H(+). The enzyme catalyses (17R,20S)-17,20-dihydroxypregn-4-en-3-one + NAD(+) = 17alpha-hydroxyprogesterone + NADH + H(+). Catalyzes the conversion of progesterone into 20-alpha-dihydroprogesterone (20 alpha-OHP). In Mus musculus (Mouse), this protein is Aldo-keto reductase family 1 member C18 (Akr1c18).